Consider the following 249-residue polypeptide: MSSRYDRAVTIFSPDGHLLQVEYAQEAVRKGSTAVGVRGANCVVLGVEKKSVAQLQEDRKVRKICMLDNHVVMAFAGLTADARIMINRAQVECQSHRLNVEDPVTLEYITRFIAQLKQKYTQSNGRRPFGISCLIGGFDADGSAHLFQTEPSGIFYEYKANATGRSAKVVREFFEKSYREEEVANEHGAVKLAIRALLEVAQSGQNNLEVAIMENGKPLKMLDTDVITDYVKIIEKEKEEELEKKKQKK.

A Phosphoserine modification is found at S177.

It belongs to the peptidase T1A family. In terms of assembly, the 26S proteasome consists of a 20S proteasome core and two 19S regulatory subunits. The 20S proteasome core is composed of 28 subunits that are arranged in four stacked rings, resulting in a barrel-shaped structure. The two end rings are each formed by seven alpha subunits, and the two central rings are each formed by seven beta subunits. The catalytic chamber with the active sites is on the inside of the barrel. Interacts with PI31; this interaction is reduced by PI31 ADP-ribosylation.

The protein resides in the cytoplasm. The protein localises to the nucleus. Its function is as follows. The proteasome is a multicatalytic proteinase complex which is characterized by its ability to cleave peptides with Arg, Phe, Tyr, Leu, and Glu adjacent to the leaving group at neutral or slightly basic pH. The proteasome has an ATP-dependent proteolytic activity. This Drosophila melanogaster (Fruit fly) protein is Proteasome subunit alpha type-7-1 (Prosalpha4).